A 454-amino-acid chain; its full sequence is Photosystem II CP47 reaction center protein (454 aa).

6 helical membrane passes run 6 to 26 (MFVLPFMTRLGVTNSWGGWTI), 47 to 61 (IILSGLLFLAAIWHW), 86 to 102 (GIHLFLSGVLCFGFGAF), 149 to 164 (IAAGIVGILAGLFHLS), 183 to 198 (VLSSSIAAVFWAAFVV), and 403 to 418 (SFALLFFFGHIWHGAR).

It belongs to the PsbB/PsbC family. PsbB subfamily. In terms of assembly, PSII is composed of 1 copy each of membrane proteins PsbA, PsbB, PsbC, PsbD, PsbE, PsbF, PsbH, PsbI, PsbJ, PsbK, PsbL, PsbM, PsbT, PsbX, PsbY, PsbZ, Psb30/Ycf12, at least 3 peripheral proteins of the oxygen-evolving complex and a large number of cofactors. It forms dimeric complexes. Binds multiple chlorophylls. PSII binds additional chlorophylls, carotenoids and specific lipids. serves as cofactor.

Its subcellular location is the plastid. It is found in the chloroplast thylakoid membrane. In terms of biological role, one of the components of the core complex of photosystem II (PSII). It binds chlorophyll and helps catalyze the primary light-induced photochemical processes of PSII. PSII is a light-driven water:plastoquinone oxidoreductase, using light energy to abstract electrons from H(2)O, generating O(2) and a proton gradient subsequently used for ATP formation. This is Photosystem II CP47 reaction center protein from Ostreococcus tauri.